The following is a 100-amino-acid chain: Co-chaperonin GroES (100 aa).

The protein belongs to the GroES chaperonin family. As to quaternary structure, heptamer of 7 subunits arranged in a ring. Interacts with the chaperonin GroEL.

The protein localises to the cytoplasm. Together with the chaperonin GroEL, plays an essential role in assisting protein folding. The GroEL-GroES system forms a nano-cage that allows encapsulation of the non-native substrate proteins and provides a physical environment optimized to promote and accelerate protein folding. GroES binds to the apical surface of the GroEL ring, thereby capping the opening of the GroEL channel. The polypeptide is Co-chaperonin GroES (Mycobacterium leprae (strain Br4923)).